A 71-amino-acid polypeptide reads, in one-letter code: Small ribosomal subunit protein bS21 (71 aa).

A disordered region spans residues 43-71 (TERKRAKASAVKRHAKKLARENARRTRLY). Basic residues predominate over residues 46–59 (KRAKASAVKRHAKK). The segment covering 60 to 71 (LARENARRTRLY) has biased composition (basic and acidic residues).

This sequence belongs to the bacterial ribosomal protein bS21 family.

This chain is Small ribosomal subunit protein bS21, found in Edwardsiella ictaluri (strain 93-146).